The following is a 519-amino-acid chain: Cytochrome P450 52A13 (519 aa).

Cys466 contacts heme.

Belongs to the cytochrome P450 family. The cofactor is heme.

It is found in the membrane. Functionally, together with an NADPH cytochrome P450 the enzyme system catalyzes the terminal hydroxylation as the first step in the assimilation of alkanes and fatty acids. The polypeptide is Cytochrome P450 52A13 (CYP52A13) (Debaryomyces hansenii (Yeast)).